A 203-amino-acid polypeptide reads, in one-letter code: Holliday junction branch migration complex subunit RuvA (203 aa).

A domain I region spans residues 1-64 (MIGRLRGYIL…EDAQLLYGFN (64 aa)). A domain II region spans residues 65 to 142 (DKQERALFRE…KGLNGDLFNN (78 aa)). Residues 143–154 (SSEITLPTAAQA) are flexible linker. Residues 155 to 203 (AELDAEAEAASALVALGYKPQEASRMVSKIAKPGADCETLIRDALRAAL) are domain III.

The protein belongs to the RuvA family. Homotetramer. Forms an RuvA(8)-RuvB(12)-Holliday junction (HJ) complex. HJ DNA is sandwiched between 2 RuvA tetramers; dsDNA enters through RuvA and exits via RuvB. An RuvB hexamer assembles on each DNA strand where it exits the tetramer. Each RuvB hexamer is contacted by two RuvA subunits (via domain III) on 2 adjacent RuvB subunits; this complex drives branch migration. In the full resolvosome a probable DNA-RuvA(4)-RuvB(12)-RuvC(2) complex forms which resolves the HJ.

Its subcellular location is the cytoplasm. The RuvA-RuvB-RuvC complex processes Holliday junction (HJ) DNA during genetic recombination and DNA repair, while the RuvA-RuvB complex plays an important role in the rescue of blocked DNA replication forks via replication fork reversal (RFR). RuvA specifically binds to HJ cruciform DNA, conferring on it an open structure. The RuvB hexamer acts as an ATP-dependent pump, pulling dsDNA into and through the RuvAB complex. HJ branch migration allows RuvC to scan DNA until it finds its consensus sequence, where it cleaves and resolves the cruciform DNA. In Serratia proteamaculans (strain 568), this protein is Holliday junction branch migration complex subunit RuvA.